The chain runs to 362 residues: N5-carboxyaminoimidazole ribonucleotide synthase (362 aa).

ATP is bound by residues Arg-85, Lys-125, 130-136 (GYDGRGQ), 158-161 (EKFI), Glu-166, and 244-245 (NE). In terms of domain architecture, ATP-grasp spans 89-274 (KSLLDELNLS…QFELHLRALL (186 aa)).

Belongs to the PurK/PurT family. Homodimer.

The enzyme catalyses 5-amino-1-(5-phospho-beta-D-ribosyl)imidazole + hydrogencarbonate + ATP = 5-carboxyamino-1-(5-phospho-D-ribosyl)imidazole + ADP + phosphate + 2 H(+). Its pathway is purine metabolism; IMP biosynthesis via de novo pathway; 5-amino-1-(5-phospho-D-ribosyl)imidazole-4-carboxylate from 5-amino-1-(5-phospho-D-ribosyl)imidazole (N5-CAIR route): step 1/2. In terms of biological role, catalyzes the ATP-dependent conversion of 5-aminoimidazole ribonucleotide (AIR) and HCO(3)(-) to N5-carboxyaminoimidazole ribonucleotide (N5-CAIR). The sequence is that of N5-carboxyaminoimidazole ribonucleotide synthase from Haemophilus influenzae (strain ATCC 51907 / DSM 11121 / KW20 / Rd).